The chain runs to 557 residues: MASLALSGSCSLAFPLKSRSLSLPRPPSSSLNLTKPLRSLDSRFSLLKSPLPVSLRRRSSTLVKASSTVASASSSPTPPLVPAPVPWQGAAIKPLLASIATGLILWFVPVPEGVTRNAWQLLAIFLATIVGIITQPLPLGAVALMGLGASVLTKTLTFAAAFSAFGDPIPWLIALAFFFARGFIKTGLGNRVAYQFVRLFGSSSLGLGYSLVFSEALLAPAIPSVSARAGGIFLPLVKSLCVACGSNVGDGTEHRLGSWLMLTCFQTSVISSSMFLTAMAANPLSANLAFNTIKQTIGWTDWAKAAIVPGLVSLIVVPFLLYLIYPPTVKSSPDAPKLAQEKLDKMGPMSKNELIMAATLFLTVGLWIFGAKLGVDAVTAAILGLSVLLVTGVVTWKECLAESVAWDTLTWFAALIAMAGYLNKYGLIEWFSQTVVKFVGGLGLSWQLSFGILVLLYFYTHYFFASGAAHIGAMFTAFLSVSTALGTPPYFAALVLAFLSNLMGGLTHYGIGSAPIFYGANYVPLAKWWGYGFLISIVNILIWLGVGGAWWKFIGLW.

A chloroplast-targeting transit peptide spans 1-69; sequence MASLALSGSC…STLVKASSTV (69 aa). 12 helical membrane passes run 90–110, 122–142, 158–178, 229–249, 256–276, 305–325, 355–375, 376–396, 411–431, 438–458, 477–497, and 531–551; these read AAIK…FVPV, LAIF…LGAV, FAAA…LAFF, AGGI…SNVG, LGSW…SMFL, AAIV…YLIY, IMAA…KLGV, DAVT…VVTW, WFAA…IEWF, FVGG…LLYF, AFLS…LVLA, and YGFL…GAWW.

It belongs to the SLC13A/DASS transporter (TC 2.A.47) family. DIT1 subfamily. As to expression, expressed in roots, rosette and cauline leaves, stems, flowers and siliques.

Its subcellular location is the plastid. The protein localises to the chloroplast inner membrane. Functionally, 2-oxoglutarate/malate translocator involved with DIT2-1 in primary ammonia assimilation and in the re-assimilation of ammonia generated by the photorespiratory pathway. Imports 2-oxoglutarate into plastids as precursor for ammonia assimilation. 2-oxoglutarate is converted to glutamate, the end product of ammonia assimilation, which is exported to the cytosol by DIT2-1. The sequence is that of Dicarboxylate transporter 1, chloroplastic (DIT1) from Arabidopsis thaliana (Mouse-ear cress).